The chain runs to 484 residues: MKFKQDFFTQLPEFYSQVYPQGISNPHWLAWSEDAAKLIDLQQPTDALLQGLSGNAAVEGASYYAQVYSGHQFGGYTPRLGDGRSIILGEALGPQGAWDVALKGGGPTPYSRHGDGRAVMRSAVREFLVSEALHHLGVPTTRALAVIGSDMPVWRESQETAAITVRLARSHIRFGHFEFFCHSERGQADKLTQLLNFTLKQHYPNLSCDLAGYKAWFLQVVQDTAKLIAHWQAIGFAHGVMNTDNMSILGDSFDFGPFAFLDTFQEDFICNHSDPEGRYAFGQQPGIGLWNLQRLAQALTPVIPSDDLIAALNQYQHALVQHYLMLMRVKLGLTERADSTAEQDQQDLELIGRFTVLMEKNQLDYSNTWRRFGQLDPSSAHSSLRDDFIDLNEFDAWYQAYQARLGKVTDIEAWQQARNSVNPKYILRNYLAQEAIIAVEEGNLAPLERLHQVLRQPFAEQVEHEDLAKRPPDWGQGLIMSCSS.

8 residues coordinate ATP: Gly-81, Gly-83, Arg-84, Lys-103, Asp-115, Gly-116, Arg-166, and Arg-173. Asp-244 functions as the Proton acceptor in the catalytic mechanism. Residues Asn-245 and Asp-254 each coordinate Mg(2+). Asp-254 lines the ATP pocket.

It belongs to the SELO family. The cofactor is Mg(2+). Requires Mn(2+) as cofactor.

It catalyses the reaction L-seryl-[protein] + ATP = 3-O-(5'-adenylyl)-L-seryl-[protein] + diphosphate. The catalysed reaction is L-threonyl-[protein] + ATP = 3-O-(5'-adenylyl)-L-threonyl-[protein] + diphosphate. The enzyme catalyses L-tyrosyl-[protein] + ATP = O-(5'-adenylyl)-L-tyrosyl-[protein] + diphosphate. It carries out the reaction L-histidyl-[protein] + UTP = N(tele)-(5'-uridylyl)-L-histidyl-[protein] + diphosphate. It catalyses the reaction L-seryl-[protein] + UTP = O-(5'-uridylyl)-L-seryl-[protein] + diphosphate. The catalysed reaction is L-tyrosyl-[protein] + UTP = O-(5'-uridylyl)-L-tyrosyl-[protein] + diphosphate. Functionally, nucleotidyltransferase involved in the post-translational modification of proteins. It can catalyze the addition of adenosine monophosphate (AMP) or uridine monophosphate (UMP) to a protein, resulting in modifications known as AMPylation and UMPylation. This chain is Protein nucleotidyltransferase YdiU, found in Shewanella sp. (strain MR-4).